Reading from the N-terminus, the 397-residue chain is Phosphoglycerate kinase (397 aa).

Residues 26–28, arginine 42, 65–68, arginine 119, and arginine 152 contribute to the substrate site; these read DLN and HLGR. ATP contacts are provided by residues lysine 203, glutamate 325, and 351–354; that span reads GGDT.

It belongs to the phosphoglycerate kinase family. In terms of assembly, monomer.

The protein localises to the cytoplasm. The catalysed reaction is (2R)-3-phosphoglycerate + ATP = (2R)-3-phospho-glyceroyl phosphate + ADP. It functions in the pathway carbohydrate degradation; glycolysis; pyruvate from D-glyceraldehyde 3-phosphate: step 2/5. In Bordetella bronchiseptica (strain ATCC BAA-588 / NCTC 13252 / RB50) (Alcaligenes bronchisepticus), this protein is Phosphoglycerate kinase.